A 74-amino-acid chain; its full sequence is SPbeta prophage-derived uncharacterized HTH-type transcriptional regulator YopS (74 aa).

Residues 11–66 (IPELCRKKDITINELSEITGIKKQQLSDYNRLVKVDMSIRTAKRIAAALDCNVEDL) form the HTH cro/C1-type domain. The H-T-H motif DNA-binding region spans 22–41 (INELSEITGIKKQQLSDYNR).

The sequence is that of SPbeta prophage-derived uncharacterized HTH-type transcriptional regulator YopS (yopS) from Bacillus subtilis (strain 168).